Reading from the N-terminus, the 901-residue chain is Protein translocase subunit SecA (901 aa).

ATP is bound by residues Gln-89, 107 to 111 (GEGKT), and Asp-502. Residues Cys-884, Cys-886, Cys-895, and His-896 each contribute to the Zn(2+) site.

The protein belongs to the SecA family. As to quaternary structure, monomer and homodimer. Part of the essential Sec protein translocation apparatus which comprises SecA, SecYEG and auxiliary proteins SecDF-YajC and YidC. Requires Zn(2+) as cofactor.

The protein localises to the cell inner membrane. The protein resides in the cytoplasm. It catalyses the reaction ATP + H2O + cellular proteinSide 1 = ADP + phosphate + cellular proteinSide 2.. Part of the Sec protein translocase complex. Interacts with the SecYEG preprotein conducting channel. Has a central role in coupling the hydrolysis of ATP to the transfer of proteins into and across the cell membrane, serving both as a receptor for the preprotein-SecB complex and as an ATP-driven molecular motor driving the stepwise translocation of polypeptide chains across the membrane. In Sinorhizobium fredii (strain NBRC 101917 / NGR234), this protein is Protein translocase subunit SecA.